Here is a 456-residue protein sequence, read N- to C-terminus: Trigger factor (456 aa).

The PPIase FKBP-type domain maps to Gly-192–Pro-277.

Belongs to the FKBP-type PPIase family. Tig subfamily.

The protein resides in the cytoplasm. The catalysed reaction is [protein]-peptidylproline (omega=180) = [protein]-peptidylproline (omega=0). In terms of biological role, involved in protein export. Acts as a chaperone by maintaining the newly synthesized protein in an open conformation. Functions as a peptidyl-prolyl cis-trans isomerase. The chain is Trigger factor from Streptococcus pyogenes serotype M2 (strain MGAS10270).